We begin with the raw amino-acid sequence, 63 residues long: Small ribosomal subunit protein bS21 (63 aa).

A compositionally biased stretch (basic and acidic residues) spans 40-52 (KPSVKRKLKSEAA). Residues 40 to 63 (KPSVKRKLKSEAARKRKNKRGRRY) are disordered. Residues 53–63 (RKRKNKRGRRY) show a composition bias toward basic residues.

It belongs to the bacterial ribosomal protein bS21 family.

This is Small ribosomal subunit protein bS21 from Limosilactobacillus reuteri (strain DSM 20016) (Lactobacillus reuteri).